A 205-amino-acid polypeptide reads, in one-letter code: Protein TON_1965 (205 aa).

Residues 7-201 (EWGEFLVRLA…EEYPKGPVKR (195 aa)) form the AMMECR1 domain.

The polypeptide is Protein TON_1965 (Thermococcus onnurineus (strain NA1)).